Consider the following 202-residue polypeptide: Securin (202 aa).

Residues 36–55 (DGRSQVSTPHVGKMFDAPPA) form a disordered region. The D-box signature appears at 61 to 64 (RKAL). 2 short sequence motifs (TEK-box) span residues 71-73 (TEK) and 94-96 (TEK). An SH3-binding motif is present at residues 163 to 173 (PPSPLKMPPLL). At S165 the chain carries Phosphoserine; by CDK1.

It belongs to the securin family. As to quaternary structure, interacts with RPS10 and DNAJA1. Interacts with the caspase-like ESPL1, and prevents its protease activity probably by covering its active site. Interacts with TP53 and blocks its activity probably by blocking its binding to DNA. Interacts with the Ku 70 kDa subunit of ds-DNA kinase. Interacts with PTTG1IP. In terms of processing, phosphorylated at Ser-165 by CDK1 during mitosis. Phosphorylated in vitro by ds-DNA kinase. Post-translationally, ubiquitinated through 'Lys-11' linkage of ubiquitin moieties by the anaphase promoting complex (APC) at the onset of anaphase, conducting to its degradation. 'Lys-11'-linked ubiquitination is mediated by the E2 ligase UBE2C/UBCH10.

The protein resides in the cytoplasm. It is found in the nucleus. In terms of biological role, regulatory protein, which plays a central role in chromosome stability, in the p53/TP53 pathway, and DNA repair. Probably acts by blocking the action of key proteins. During the mitosis, it blocks Separase/ESPL1 function, preventing the proteolysis of the cohesin complex and the subsequent segregation of the chromosomes. At the onset of anaphase, it is ubiquitinated, conducting to its destruction and to the liberation of ESPL1. Its function is however not limited to a blocking activity, since it is required to activate ESPL1. Negatively regulates the transcriptional activity and related apoptosis activity of TP53. The negative regulation of TP53 may explain the strong transforming capability of the protein when it is overexpressed. May also play a role in DNA repair via its interaction with Ku, possibly by connecting DNA damage-response pathways with sister chromatid separation. This Bos taurus (Bovine) protein is Securin (PTTG1).